A 446-amino-acid chain; its full sequence is Na(+)-translocating NADH-quinone reductase subunit A (446 aa).

The protein belongs to the NqrA family. As to quaternary structure, composed of six subunits; NqrA, NqrB, NqrC, NqrD, NqrE and NqrF.

The catalysed reaction is a ubiquinone + n Na(+)(in) + NADH + H(+) = a ubiquinol + n Na(+)(out) + NAD(+). In terms of biological role, NQR complex catalyzes the reduction of ubiquinone-1 to ubiquinol by two successive reactions, coupled with the transport of Na(+) ions from the cytoplasm to the periplasm. NqrA to NqrE are probably involved in the second step, the conversion of ubisemiquinone to ubiquinol. The sequence is that of Na(+)-translocating NADH-quinone reductase subunit A from Vibrio atlanticus (strain LGP32) (Vibrio splendidus (strain Mel32)).